A 597-amino-acid polypeptide reads, in one-letter code: Sialic acid-binding Ig-like lectin 12 (597 aa).

The signal sequence occupies residues 1-20 (MLLLLLLLLLPPLLCGRVGA). Ig-like V-type domains follow at residues 21–144 (KEQK…VNVT) and 145–271 (ASQD…VHVT). Residues 21 to 483 (KEQKDYLLTM…RPISGVTLGA (463 aa)) are Extracellular-facing. A disulfide bridge links C46 with C106. N142, N181, N232, and N292 each carry an N-linked (GlcNAc...) asparagine glycan. Intrachain disulfides connect C168-C301, C173-C233, and C295-C344. Positions 277–360 (PTFSIPGTLE…AGVTTTRAVR (84 aa)) constitute an Ig-like C2-type 1 domain. 3 N-linked (GlcNAc...) asparagine glycosylation sites follow: N362, N369, and N387. Residues 367 to 464 (PQNLTMTVFQ…GSQHISLSLS (98 aa)) enclose the Ig-like C2-type 2 domain. C403 and C448 form a disulfide bridge. Residues 484–504 (VGGAGATALVFLSFCIIFVVV) form a helical membrane-spanning segment. Over 505–597 (RSCRKKSARP…YEYSEINILK (93 aa)) the chain is Cytoplasmic. A disordered region spans residues 514–558 (PAVGVGDTGMEDTNAVRGSASQGPLIESPADDSPPHHAPPALATP). Positions 565–570 (IQYASL) match the ITIM motif motif. 2 positions are modified to phosphotyrosine: Y567 and Y590. Residues 588-593 (YEYSEI) carry the SLAM-like motif motif.

It belongs to the immunoglobulin superfamily. SIGLEC (sialic acid binding Ig-like lectin) family.

It is found in the membrane. Its function is as follows. Putative adhesion molecule that mediates sialic-acid dependent binding to cells. The sialic acid recognition site may be masked by cis interactions with sialic acids on the same cell surface. This chain is Sialic acid-binding Ig-like lectin 12 (SIGLEC12), found in Pan troglodytes (Chimpanzee).